A 233-amino-acid polypeptide reads, in one-letter code: MPKRGKKYLEAAKLVDRFKAYPIAEAIELVKKTNIAKFDATVEVAFRLGVDPKKADQQIRGAVVLPHGTGKVQRVLVFAKGEKAKEAEAAGADYVGDTEYINKIQQGWFDFDVVVATPDMMGEVGKLGRILGPKGLMPNPKTGTVTFDVAKAVQEIKAGKVEYRVDKAGNIHVPIGKVSFDNEKLAENFTTIYEAILKAKPAAAKGTYVKNVTITSTMGPGIKVDPSTVAVAQ.

This sequence belongs to the universal ribosomal protein uL1 family. In terms of assembly, part of the 50S ribosomal subunit.

Its function is as follows. Binds directly to 23S rRNA. The L1 stalk is quite mobile in the ribosome, and is involved in E site tRNA release. In terms of biological role, protein L1 is also a translational repressor protein, it controls the translation of the L11 operon by binding to its mRNA. The sequence is that of Large ribosomal subunit protein uL1 from Geobacillus sp. (strain WCH70).